Consider the following 74-residue polypeptide: Cytochrome b (74 aa).

Residues 34 to 54 (FGSLLAICLVTQILTGLLLAM) form a helical membrane-spanning segment.

Belongs to the cytochrome b family. As to quaternary structure, the cytochrome bc1 complex contains 11 subunits: 3 respiratory subunits (MT-CYB, CYC1 and UQCRFS1), 2 core proteins (UQCRC1 and UQCRC2) and 6 low-molecular weight proteins (UQCRH/QCR6, UQCRB/QCR7, UQCRQ/QCR8, UQCR10/QCR9, UQCR11/QCR10 and a cleavage product of UQCRFS1). This cytochrome bc1 complex then forms a dimer. It depends on heme as a cofactor.

The protein localises to the mitochondrion inner membrane. In terms of biological role, component of the ubiquinol-cytochrome c reductase complex (complex III or cytochrome b-c1 complex) that is part of the mitochondrial respiratory chain. The b-c1 complex mediates electron transfer from ubiquinol to cytochrome c. Contributes to the generation of a proton gradient across the mitochondrial membrane that is then used for ATP synthesis. The chain is Cytochrome b (MT-CYB) from Anser caerulescens (Snow goose).